We begin with the raw amino-acid sequence, 430 residues long: Resistance to inhibitors of cholinesterase protein 19 (430 aa).

The 205-residue stretch at 56–260 (ASDNELDTCL…TSRAFETLAE (205 aa)) folds into the AH domain. Residues 279 to 342 (GTKPERERKS…SPLIEDVDDE (64 aa)) form a disordered region. Residues 281–294 (KPERERKSEKEESA) show a composition bias toward basic and acidic residues.

As to quaternary structure, interacts with the GTPase activator protein tbc-8; the interaction is direct and may be required for the activation of rab-2 and dense vesicle maturation in cholinergic motoneurons. Interacts with rund-1. As to expression, expressed in all neurons. Highly expressed in m2 pharyngeal neurons and some pharyngeal interneurons. Also expressed in the excretory canal and the gland cells located just below the nerve ring in the head.

The protein localises to the cytoplasm. Its subcellular location is the cytoplasmic vesicle membrane. Functionally, may be involved in neurotransmitter secretion. In association with the GTPase activator protein tbc-8 activates rab-2 during dense core vesicle maturation in cholinergic motoneurons. In Caenorhabditis elegans, this protein is Resistance to inhibitors of cholinesterase protein 19.